The chain runs to 247 residues: Probable 2-phosphosulfolactate phosphatase (247 aa).

Belongs to the ComB family. The cofactor is Mg(2+).

The catalysed reaction is (2R)-O-phospho-3-sulfolactate + H2O = (2R)-3-sulfolactate + phosphate. The protein is Probable 2-phosphosulfolactate phosphatase of Clostridium perfringens (strain 13 / Type A).